A 147-amino-acid polypeptide reads, in one-letter code: RxLR effector protein Avr3a (147 aa).

The first 21 residues, 1–21 (MRLAIMLSATAVAINFATCSA), serve as a signal peptide directing secretion. Residues 44–59 (RLLRKNEENEETSEER) carry the RxLR-dEER motif. N6-acetyllysine is present on K48. The segment at 77–147 (ALTKRADAKK…YMMHLGLTGY (71 aa)) is effector domain.

It belongs to the RxLR effector family. As to quaternary structure, forms homodimers via the RxLR-dEER motif. Interacts with host E3 ligase CMPG1. Interacts with host DRP2. Post-translationally, proteolytically cleaved. The cleavage site directly after the RxLR sequence and the high conservation among other effector proteins suggest that the RxLR motif might play a crucial role in the intracellular processing before secretion. Glycosylated. In terms of processing, N-acetylated at Lys-48 after cleavage.

The protein resides in the secreted. Its subcellular location is the host cytoplasm. The protein localises to the host endosome. Its function is as follows. Multifunctional effector that can suppress host BAK1/SERK3-mediated immunity through at least two different pathways. Manipulates plant immunity by targeting and stabilizing host E3 ligase CMPG1. Preventing the normal 26S proteasome-dependent degradation of potato CMPG1, and thus potentially of its protein substrates in the host cell, further abolishes host cell death during the biotrophic phase of infection. Also associates with the dynamin-related protein 2 (DRP2), a plant GTPase involved in immune receptor-mediated endocytosis. The Avr3A(KI) form is recognized by R3a which triggers R3a-mediated hypersensitivity and suppresses INF1-induced cell death. In Phytophthora infestans (Potato late blight agent), this protein is RxLR effector protein Avr3a.